Here is a 237-residue protein sequence, read N- to C-terminus: 1-(5-phosphoribosyl)-5-[(5-phosphoribosylamino)methylideneamino] imidazole-4-carboxamide isomerase (237 aa).

Asp8 serves as the catalytic Proton acceptor. Asp130 (proton donor) is an active-site residue.

It belongs to the HisA/HisF family.

The protein localises to the cytoplasm. It carries out the reaction 1-(5-phospho-beta-D-ribosyl)-5-[(5-phospho-beta-D-ribosylamino)methylideneamino]imidazole-4-carboxamide = 5-[(5-phospho-1-deoxy-D-ribulos-1-ylimino)methylamino]-1-(5-phospho-beta-D-ribosyl)imidazole-4-carboxamide. The protein operates within amino-acid biosynthesis; L-histidine biosynthesis; L-histidine from 5-phospho-alpha-D-ribose 1-diphosphate: step 4/9. This is 1-(5-phosphoribosyl)-5-[(5-phosphoribosylamino)methylideneamino] imidazole-4-carboxamide isomerase from Caldicellulosiruptor bescii (strain ATCC BAA-1888 / DSM 6725 / KCTC 15123 / Z-1320) (Anaerocellum thermophilum).